The primary structure comprises 238 residues: MSKIEISNDTRIIRHRTPARISHWMLVICFFMTMFTGVAFFFPDFAWLTEILGTPQIARAIHPFTGILMFFAFIYLALLYWDHNIPEKNDIRWAKGVIEVLKGNEHAVADNGKYNLGQKMLFWTLNLAMVTLLVTGIIMWRQYFSHYFSIPVLRIAILLHSASAFMLFTGILVHIYMAFWVKGSIRGIVEGWVTVRWAKKHHPRWYREEVLSKLEEDLLNEQSGKVGKTKVLFKGFGK.

Heme b is bound by residues H23 and H62. Transmembrane regions (helical) follow at residues 23–43, 60–80, 120–140, and 155–175; these read HWML…FFFP, AIHP…ALLY, MLFW…IIMW, and IAIL…LVHI. Residues H160 and H174 each contribute to the heme b site.

It belongs to the formate dehydrogenase gamma subunit family. In terms of assembly, formate dehydrogenase is a membrane-bound complex, formed by subunits alpha, beta and gamma. Requires heme as cofactor.

The protein localises to the cell membrane. Allows to use formate as major electron donor during anaerobic respiration. Subunit gamma is probably the cytochrome b556(FDO) component of the formate dehydrogenase. This Haemophilus influenzae (strain ATCC 51907 / DSM 11121 / KW20 / Rd) protein is Formate dehydrogenase, cytochrome b556 subunit (fdxI).